A 260-amino-acid chain; its full sequence is MSDEQYDAALSLLRRLDPKNVSVNLNSLCKIAPELAEDLLSSVDQPLGVKTCKSTKKEYLTCDYNRDGDSFRSPWSGDYEPATDGPTPSAALRKLEVLANDSFDIYRDLYYEGGVSSVYLWDQGEGDNTNSFAGVVLLKKTSPSSSWDSIHVFEVETSRGEGIYRVTSTVILDLGSKSPKLGLSGNLTRQTEREMAVDEPSQHIANLGSIVEDVESKLRNQLQEVYFGKARDIVGQVRSLGGVEDAKQKQRQEEVIKGLQ.

This sequence belongs to the F-actin-capping protein beta subunit family. As to quaternary structure, component of the F-actin capping complex, composed of a heterodimer of an alpha and a beta subunit.

The protein localises to the cytoplasm. It localises to the cytoskeleton. Its subcellular location is the actin patch. Its function is as follows. F-actin-capping proteins bind in a Ca(2+)-independent manner to the fast growing ends of actin filaments (barbed end) thereby blocking the exchange of subunits at these ends. Unlike other capping proteins (such as gelsolin and severin), these proteins do not sever actin filaments. This Yarrowia lipolytica (strain CLIB 122 / E 150) (Yeast) protein is F-actin-capping protein subunit beta (CAP2).